We begin with the raw amino-acid sequence, 1398 residues long: DNA topoisomerase 2 (1398 aa).

ATP-binding positions include N69, N103, 131–133, and 144–151; these read SDN and GRNGFGAK. Positions 260-317 are disordered; that stretch reads NSNDNKNNKGQNDNNNNNNNNNDENANQNNDNLDVSLSNEPADGTPTKNNNNNNNNND. Residues 267 to 291 are compositionally biased toward low complexity; sequence NKGQNDNNNNNNNNNDENANQNNDN. 411–413 serves as a coordination point for ATP; it reads QTK. Residues 493 to 608 enclose the Toprim domain; it reads CTLILTEGDS…SLLKHKGFLS (116 aa). Residues E499, D577, and D579 each coordinate Mg(2+). Residues 739–1191 enclose the Topo IIA-type catalytic domain; sequence IPNIMDGWKP…TVETMWLKDI (453 aa). The active-site O-(5'-phospho-DNA)-tyrosine intermediate is Y830. Residues 1012 to 1021 form an interaction with DNA region; sequence KLKSTLTTTN. Disordered stretches follow at residues 1214-1250 and 1262-1361; these read KFKV…SDSS and NTNK…NSSI. A compositionally biased stretch (low complexity) spans 1262 to 1276; sequence NTNKKTTTSSNNVNN. 2 stretches are compositionally biased toward polar residues: residues 1287-1300 and 1348-1357; these read LNSN…SVSK and DSTNDNNSEL.

It belongs to the type II topoisomerase family. Homodimer. The cofactor is Mg(2+). Mn(2+) is required as a cofactor. Requires Ca(2+) as cofactor.

It is found in the nucleus. It catalyses the reaction ATP-dependent breakage, passage and rejoining of double-stranded DNA.. Control of topological states of DNA by transient breakage and subsequent rejoining of DNA strands. Topoisomerase II makes double-strand breaks. This is DNA topoisomerase 2 (TOP2) from Plasmodium falciparum (isolate K1 / Thailand).